A 352-amino-acid chain; its full sequence is Aliphatic aldoxime dehydratase (352 aa).

Ser-219 contacts an aliphatic aldoxime. His-299 is a binding site for heme b. Residue His-320 coordinates an aliphatic aldoxime. His-320 is a catalytic residue.

Belongs to the heme-containing dehydratase family. Homodimer. Heme b is required as a cofactor. Ca(2+) serves as cofactor.

The enzyme catalyses an aliphatic aldoxime = a nitrile + H2O. Its activity is regulated as follows. Active when the heme iron is in the ferrous state. Is very sensitive to AgNO(3), is also inhibited by hydroxylamine and phenylhydrazine, and hardly inhibited by thiol reagents. Not sensitive to chelating agents and serine-modifying reagents. Its function is as follows. Catalyzes the dehydration of aldoximes to their corresponding nitrile. Aliphatic aldoximes are more effective substrates than aromatic aldoximes. Shows high activity with butyraldoxime and acetaldoxime, but only weak activity with the aromatic aldoxime pyridine-2-aldoxime. Cannot use benzaldoxime, isonitrosoacetophenone and pyridine-4-aldoxime. Is involved in the metabolism of aldoxime in vivo. In Pseudomonas chlororaphis (Pseudomonas aureofaciens), this protein is Aliphatic aldoxime dehydratase.